A 38-amino-acid polypeptide reads, in one-letter code: Potassium channel toxin alpha-KTx 2.3 (38 aa).

3 cysteine pairs are disulfide-bonded: cysteine 7-cysteine 29, cysteine 13-cysteine 34, and cysteine 17-cysteine 36.

It belongs to the short scorpion toxin superfamily. Potassium channel inhibitor family. Alpha-KTx 02 subfamily. As to expression, expressed by the venom gland.

It is found in the secreted. In terms of biological role, inhibitor of voltage-gated potassium channels (Kv). It is capable of displacing the binding of radio-labeled noxiustoxin (AC P08815) to rat brain synaptosomes with high affinity (about 100 pM). It is also capable of inhibiting transient potassium-currents (resembling I(A)-type currents), in cultured rat cerebellar granule cells. About 50% of the peak currents are reduced by application of a 1.5 uM solution of this toxin. The protein is Potassium channel toxin alpha-KTx 2.3 of Centruroides limpidus (Mexican scorpion).